Reading from the N-terminus, the 393-residue chain is Endoglucanase 1 (393 aa).

Positions 1-26 (MAFKLNIGLLALSLSLSLVHLDGVRA) are cleaved as a signal peptide. Asp-34 functions as the Nucleophile in the catalytic mechanism. The Proton donor role is filled by Asp-152. The tract at residues 233–393 (GCQRKDDNTI…GGHKKCHKKH (161 aa)) is disordered. 2 stretches are compositionally biased toward low complexity: residues 319-329 (QGSSNGDATTG) and 337-370 (DSGS…NPGA). N-linked (GlcNAc...) asparagine glycosylation occurs at Asn-343. The segment covering 371-384 (AQGGQGGAQPGPSG) has biased composition (gly residues).

It belongs to the glycosyl hydrolase 45 (cellulase K) family. Post-translationally, may also be O-glycosylated. In terms of tissue distribution, hyphal tip.

It is found in the secreted. The enzyme catalyses Endohydrolysis of (1-&gt;4)-beta-D-glucosidic linkages in cellulose, lichenin and cereal beta-D-glucans.. The sequence is that of Endoglucanase 1 (EGL1) from Mycosarcoma maydis (Corn smut fungus).